A 178-amino-acid polypeptide reads, in one-letter code: Probable chorismate pyruvate-lyase (178 aa).

Substrate-binding residues include R67, L105, and E164.

Belongs to the UbiC family.

It localises to the cytoplasm. It carries out the reaction chorismate = 4-hydroxybenzoate + pyruvate. It functions in the pathway cofactor biosynthesis; ubiquinone biosynthesis. Its function is as follows. Removes the pyruvyl group from chorismate, with concomitant aromatization of the ring, to provide 4-hydroxybenzoate (4HB) for the ubiquinone pathway. The polypeptide is Probable chorismate pyruvate-lyase (Methylobacillus flagellatus (strain ATCC 51484 / DSM 6875 / VKM B-1610 / KT)).